The following is a 366-amino-acid chain: Carbamoyl phosphate synthase small chain (366 aa).

The CPSase stretch occupies residues 1–171; sequence MLEKRYLVLE…KTPYVSTGSD (171 aa). 3 residues coordinate L-glutamine: S47, G221, and G223. Residues 173–360 form the Glutamine amidotransferase type-1 domain; it reads SVVLLDFGKK…IAMMKDFKEK (188 aa). The active-site Nucleophile is the C248. L-glutamine contacts are provided by L249, Q252, N290, G292, and Y293. Catalysis depends on residues H333 and E335.

It belongs to the CarA family. As to quaternary structure, composed of two chains; the small (or glutamine) chain promotes the hydrolysis of glutamine to ammonia, which is used by the large (or ammonia) chain to synthesize carbamoyl phosphate. Tetramer of heterodimers (alpha,beta)4.

It catalyses the reaction hydrogencarbonate + L-glutamine + 2 ATP + H2O = carbamoyl phosphate + L-glutamate + 2 ADP + phosphate + 2 H(+). It carries out the reaction L-glutamine + H2O = L-glutamate + NH4(+). The protein operates within amino-acid biosynthesis; L-arginine biosynthesis; carbamoyl phosphate from bicarbonate: step 1/1. It functions in the pathway pyrimidine metabolism; UMP biosynthesis via de novo pathway; (S)-dihydroorotate from bicarbonate: step 1/3. In terms of biological role, small subunit of the glutamine-dependent carbamoyl phosphate synthetase (CPSase). CPSase catalyzes the formation of carbamoyl phosphate from the ammonia moiety of glutamine, carbonate, and phosphate donated by ATP, constituting the first step of 2 biosynthetic pathways, one leading to arginine and/or urea and the other to pyrimidine nucleotides. The small subunit (glutamine amidotransferase) binds and cleaves glutamine to supply the large subunit with the substrate ammonia. In Staphylococcus epidermidis (strain ATCC 12228 / FDA PCI 1200), this protein is Carbamoyl phosphate synthase small chain.